A 146-amino-acid chain; its full sequence is D-aminoacyl-tRNA deacylase (146 aa).

A Gly-cisPro motif, important for rejection of L-amino acids motif is present at residues 137 to 138 (GP).

The protein belongs to the DTD family. Homodimer.

Its subcellular location is the cytoplasm. The enzyme catalyses glycyl-tRNA(Ala) + H2O = tRNA(Ala) + glycine + H(+). The catalysed reaction is a D-aminoacyl-tRNA + H2O = a tRNA + a D-alpha-amino acid + H(+). In terms of biological role, an aminoacyl-tRNA editing enzyme that deacylates mischarged D-aminoacyl-tRNAs. Also deacylates mischarged glycyl-tRNA(Ala), protecting cells against glycine mischarging by AlaRS. Acts via tRNA-based rather than protein-based catalysis; rejects L-amino acids rather than detecting D-amino acids in the active site. By recycling D-aminoacyl-tRNA to D-amino acids and free tRNA molecules, this enzyme counteracts the toxicity associated with the formation of D-aminoacyl-tRNA entities in vivo and helps enforce protein L-homochirality. This is D-aminoacyl-tRNA deacylase from Halalkalibacterium halodurans (strain ATCC BAA-125 / DSM 18197 / FERM 7344 / JCM 9153 / C-125) (Bacillus halodurans).